We begin with the raw amino-acid sequence, 1049 residues long: Isoleucine--tRNA ligase (1049 aa).

A 'HIGH' region motif is present at residues 48–58 (PYTTGRIHLGT). The 'KMSKS' region signature appears at 596–600 (KMSKS). An ATP-binding site is contributed by lysine 599.

It belongs to the class-I aminoacyl-tRNA synthetase family. IleS type 2 subfamily. In terms of assembly, monomer. Zn(2+) is required as a cofactor.

The protein resides in the cytoplasm. The catalysed reaction is tRNA(Ile) + L-isoleucine + ATP = L-isoleucyl-tRNA(Ile) + AMP + diphosphate. Its function is as follows. Catalyzes the attachment of isoleucine to tRNA(Ile). As IleRS can inadvertently accommodate and process structurally similar amino acids such as valine, to avoid such errors it has two additional distinct tRNA(Ile)-dependent editing activities. One activity is designated as 'pretransfer' editing and involves the hydrolysis of activated Val-AMP. The other activity is designated 'posttransfer' editing and involves deacylation of mischarged Val-tRNA(Ile). This Methanothrix thermoacetophila (strain DSM 6194 / JCM 14653 / NBRC 101360 / PT) (Methanosaeta thermophila) protein is Isoleucine--tRNA ligase.